The chain runs to 641 residues: Anthrax toxin receptor-like (641 aa).

Positions 1-27 are cleaved as a signal peptide; sequence MMSHSPSMPCSALFLLLLLLLPPTFKG. Residues 28–363 lie on the Extracellular side of the membrane; it reads GSLRYHGPGW…ASQGIVFKRT (336 aa). Positions 76–247 constitute a VWFA domain; the sequence is DLYLVLDKSG…SALEGVVDPL (172 aa). Serine 84, serine 86, and threonine 150 together coordinate a divalent metal cation. Residues 364–384 traverse the membrane as a helical segment; it reads WLMFLPVLLVTLLLLCCTWKL. The Cytoplasmic portion of the chain corresponds to 385-641; sequence CIKPKKLPPP…FPPISKGPKF (257 aa). Residues 391-455 form a disordered region; that stretch reads LPPPPPKPEK…ARPPPAPLPA (65 aa). Residues 407 to 436 are compositionally biased toward pro residues; it reads PPPSSPPAPGRGPGPGPSAGPGPGPGPSPG.

Belongs to the ATR family.

It is found in the membrane. The sequence is that of Anthrax toxin receptor-like (Antxrl) from Mus musculus (Mouse).